Reading from the N-terminus, the 281-residue chain is Probable endonuclease 4 (281 aa).

Residues H69, H109, E145, D179, H182, H216, D229, H231, and E261 each contribute to the Zn(2+) site.

The protein belongs to the AP endonuclease 2 family. The cofactor is Zn(2+).

The catalysed reaction is Endonucleolytic cleavage to 5'-phosphooligonucleotide end-products.. Endonuclease IV plays a role in DNA repair. It cleaves phosphodiester bonds at apurinic or apyrimidinic (AP) sites, generating a 3'-hydroxyl group and a 5'-terminal sugar phosphate. This chain is Probable endonuclease 4, found in Buchnera aphidicola subsp. Acyrthosiphon pisum (strain APS) (Acyrthosiphon pisum symbiotic bacterium).